Reading from the N-terminus, the 169-residue chain is NAD(P)H-quinone oxidoreductase subunit J, chloroplastic (169 aa).

It belongs to the complex I 30 kDa subunit family. In terms of assembly, NDH is composed of at least 16 different subunits, 5 of which are encoded in the nucleus.

It localises to the plastid. The protein resides in the chloroplast thylakoid membrane. It carries out the reaction a plastoquinone + NADH + (n+1) H(+)(in) = a plastoquinol + NAD(+) + n H(+)(out). The catalysed reaction is a plastoquinone + NADPH + (n+1) H(+)(in) = a plastoquinol + NADP(+) + n H(+)(out). Its function is as follows. NDH shuttles electrons from NAD(P)H:plastoquinone, via FMN and iron-sulfur (Fe-S) centers, to quinones in the photosynthetic chain and possibly in a chloroplast respiratory chain. The immediate electron acceptor for the enzyme in this species is believed to be plastoquinone. Couples the redox reaction to proton translocation, and thus conserves the redox energy in a proton gradient. The polypeptide is NAD(P)H-quinone oxidoreductase subunit J, chloroplastic (Physcomitrium patens (Spreading-leaved earth moss)).